A 137-amino-acid polypeptide reads, in one-letter code: Large ribosomal subunit protein uL16c (137 aa).

It belongs to the universal ribosomal protein uL16 family. In terms of assembly, part of the 50S ribosomal subunit.

The protein resides in the plastid. The protein localises to the chloroplast. The protein is Large ribosomal subunit protein uL16c of Vigna unguiculata (Cowpea).